The sequence spans 611 residues: MPPPPPQRPASSHVGRANLFSASPPPLSNRRYPHHRSLPLPPVSPRRRDPKKHSQQPSQEEPTDSGPTRTVTTNPAFRAAHLRTAYRKPVPPAAAAGEGEALLAADPTDAASGRAVVVGPSGLSFRLPGAPFDFQFSYSEAPRAPPLAIREPAFLPFAPPTMPRPWTGKAPLLTKEEKARRRGVRLHTPLGQETPQTVSAHGIMMEVRERRKMDLARVSPGDGRSREEVLGEPLTPSEVRALVKPHISHNRQLNIGRDGLTHNMLEMIHCHWRRQEICKVRCRGVPTVDMKNLCYHLEEKSGGKVIHRVGGVVFLYRGRHYDPKTRPRYPLMLWKPATPVYPKLIKEAPDGFTKEEADEMRRKGRDLLPICKLAKNGIYITLVKDVRDAFEGSDLVKIDCEGLNPSDYKKIGAKLRDLVPCVLLSFDDEQILMHRGKEWKSRYSKPLTLIPKVPKNNLAMTSVMNSSDEVSDANTQVAIREVLRPKMFKLWKSAVDSSLALLLDDAEANNLTPDSLLTLVEEFSVTSQAVEHSFPALLVTNGDASTDSLSAEYMNDEPETSVAGNEEGQLEQSPDLRDDEHFDVDMFERLESSVPLGSLPIDSMIERLNSE.

Residues 1–58 (MPPPPPQRPASSHVGRANLFSASPPPLSNRRYPHHRSLPLPPVSPRRRDPKKHSQQPS) constitute a chloroplast transit peptide. Residues 1-72 (MPPPPPQRPA…TDSGPTRTVT (72 aa)) form a disordered region. Residues 55–72 (QQPSQEEPTDSGPTRTVT) are compositionally biased toward polar residues. CRM domains are found at residues 232–328 (EPLT…TRPR) and 350–446 (DGFT…YSKP). The segment at 486–509 (KMFKLWKSAVDSSLALLLDDAEAN) is CRS2 binding. The disordered stretch occupies residues 554-578 (MNDEPETSVAGNEEGQLEQSPDLRD).

In terms of assembly, interacts with CRS2 and RNA. Part of large ribonucleo-protein complexes that include group IIB introns, CRS2 and CAF2.

It localises to the plastid. It is found in the chloroplast stroma. Functionally, required for the splicing of group IIB introns in chloroplasts. Forms splicing particles with CRS2. Interacts with RNA and confers intron specificity of the splicing particles. This Zea mays (Maize) protein is CRS2-associated factor 2, chloroplastic (CAF2).